We begin with the raw amino-acid sequence, 385 residues long: Polyketide synthase 3 (385 aa).

Residue C157 is part of the active site.

It belongs to the thiolase-like superfamily. Chalcone/stilbene synthases family. Expressed in male and female flowers, and seedlings.

The protein localises to the cytoplasm. Polyketide synthase responsible for the biosynthesis of secondary metabolites. The sequence is that of Polyketide synthase 3 (PKSF3) from Cannabis sativa (Hemp).